A 380-amino-acid polypeptide reads, in one-letter code: D-alanine--D-alanine ligase (380 aa).

The ATP-grasp domain maps to 142–348 (KQVLTAHGIR…YADLIDRLIE (207 aa)). 172-227 (QSRLGDNVFIKPANQGSSVGIHKASNVQEYLDGVADAFRYDYKVLVEQTIDGPQEV) serves as a coordination point for ATP. 3 residues coordinate Mg(2+): aspartate 302, glutamate 315, and asparagine 317.

This sequence belongs to the D-alanine--D-alanine ligase family. Mg(2+) is required as a cofactor. Requires Mn(2+) as cofactor.

It localises to the cytoplasm. The enzyme catalyses 2 D-alanine + ATP = D-alanyl-D-alanine + ADP + phosphate + H(+). It participates in cell wall biogenesis; peptidoglycan biosynthesis. Cell wall formation. The chain is D-alanine--D-alanine ligase from Levilactobacillus brevis (strain ATCC 367 / BCRC 12310 / CIP 105137 / JCM 1170 / LMG 11437 / NCIMB 947 / NCTC 947) (Lactobacillus brevis).